A 224-amino-acid chain; its full sequence is Flagellar L-ring protein (224 aa).

An N-terminal signal peptide occupies residues 1-15 (MARYFILAAALLLTA). Cysteine 16 is lipidated: N-palmitoyl cysteine. A lipid anchor (S-diacylglycerol cysteine) is attached at cysteine 16.

The protein belongs to the FlgH family. As to quaternary structure, the basal body constitutes a major portion of the flagellar organelle and consists of four rings (L,P,S, and M) mounted on a central rod.

Its subcellular location is the cell outer membrane. It localises to the bacterial flagellum basal body. Assembles around the rod to form the L-ring and probably protects the motor/basal body from shearing forces during rotation. This Shewanella sp. (strain MR-4) protein is Flagellar L-ring protein.